The following is a 100-amino-acid chain: Urease subunit gamma (100 aa).

The protein belongs to the urease gamma subunit family. Heterotrimer of UreA (gamma), UreB (beta) and UreC (alpha) subunits. Three heterotrimers associate to form the active enzyme.

Its subcellular location is the cytoplasm. The enzyme catalyses urea + 2 H2O + H(+) = hydrogencarbonate + 2 NH4(+). It participates in nitrogen metabolism; urea degradation; CO(2) and NH(3) from urea (urease route): step 1/1. The polypeptide is Urease subunit gamma (Prochlorococcus marinus (strain NATL2A)).